Reading from the N-terminus, the 436-residue chain is Type II methyltransferase M.BsuRI (436 aa).

An SAM-dependent MTase C5-type domain is found at 59–409 (INVLSLFSGC…SPIANWAINY (351 aa)). The active site involves Cys-157.

Belongs to the class I-like SAM-binding methyltransferase superfamily. C5-methyltransferase family. Monomer.

It carries out the reaction a 2'-deoxycytidine in DNA + S-adenosyl-L-methionine = a 5-methyl-2'-deoxycytidine in DNA + S-adenosyl-L-homocysteine + H(+). Its function is as follows. A methylase, recognizes the double-stranded sequence 5'-GGCC-3', methylates C-3 on both strands, and protects the DNA from cleavage by the BsuRI endonuclease. This chain is Type II methyltransferase M.BsuRI (hsdRM), found in Bacillus subtilis.